A 512-amino-acid polypeptide reads, in one-letter code: Glycine betaine transporter OpuD (512 aa).

12 consecutive transmembrane segments (helical) span residues 5–25 (ISSVFWIVIAITAAAVLWGVI), 45–65 (FGWYYLLVVSLFVGFCLFLIF), 82–102 (FGLLSWFAMLFSAGMGIGLVF), 135–155 (FFHWGLHAWAIYAIVALCIAY), 186–206 (IDCIAVFATVVGVSTSLGLGA), 222–242 (AFIVQLVLIIIVTVLFLLSAW), 257–277 (MVLAGLLMLFMLVVGPTVLIM), 312–332 (WTIFYWAWWISWSPFVGIFIA), 343–363 (FLIGVLVTPCILTFLWFSIFG), 395–415 (LTMVTSILALILIAVFFITSA), 441–461 (WGIIQSAMAAVLLYSGGLAAL), and 464–484 (TAILAALPFSIVILLMIASLY).

The protein belongs to the BCCT transporter (TC 2.A.15) family.

It is found in the cell membrane. Activity is stimulated by high osmolarity. In terms of biological role, high-affinity uptake of glycine betaine. Does not mediate either carnitine or choline uptake. In Bacillus subtilis (strain 168), this protein is Glycine betaine transporter OpuD (opuD).